We begin with the raw amino-acid sequence, 66 residues long: Sodium channel neurotoxin MeuNaTxalpha-7 (66 aa).

An LCN-type CS-alpha/beta domain is found at 2–64 (RDGYIADDKN…VPIKVSGKCN (63 aa)). Intrachain disulfides connect Cys12/Cys63, Cys16/Cys36, Cys22/Cys46, and Cys26/Cys48. Asn64 carries the post-translational modification Asparagine amide.

It belongs to the long (4 C-C) scorpion toxin superfamily. Sodium channel inhibitor family. Alpha subfamily. In terms of tissue distribution, expressed by the venom gland.

The protein localises to the secreted. Functionally, alpha toxins bind voltage-independently at site-3 of sodium channels (Nav) and inhibit the inactivation of the activated channels, thereby blocking neuronal transmission. This chain is Sodium channel neurotoxin MeuNaTxalpha-7, found in Mesobuthus eupeus (Lesser Asian scorpion).